Consider the following 301-residue polypeptide: MADLIPLIATDSLPSNRARRPEWLKVRAPGGANYHDVFRLMREQNLHTVCEEAHCPNIGECWNHRTATFLLLGNICTRGCRYCAIGKGKPEPIDEHEPERVAASVAHLKLKFAVLTSVNRDDVPDGGASIFARTIELIRQKAPDCKVEVLIPDFDGNWEALETVLAAEPDVLNHNIETVPRLFRRFRPRARFEQSIELLARARAARPYLVTKSGMMVGAGETNEEVYQVIDRLRDVDVNVLTIGQYLSPGASYWPVDRYVTPAEFAEFRRYALERGFRHVESGPLVRSSYHAHLHVNAQQH.

7 residues coordinate [4Fe-4S] cluster: C50, C55, C61, C76, C80, C83, and S289. The Radical SAM core domain occupies W62 to R278.

This sequence belongs to the radical SAM superfamily. Lipoyl synthase family. Requires [4Fe-4S] cluster as cofactor.

Its subcellular location is the cytoplasm. It catalyses the reaction [[Fe-S] cluster scaffold protein carrying a second [4Fe-4S](2+) cluster] + N(6)-octanoyl-L-lysyl-[protein] + 2 oxidized [2Fe-2S]-[ferredoxin] + 2 S-adenosyl-L-methionine + 4 H(+) = [[Fe-S] cluster scaffold protein] + N(6)-[(R)-dihydrolipoyl]-L-lysyl-[protein] + 4 Fe(3+) + 2 hydrogen sulfide + 2 5'-deoxyadenosine + 2 L-methionine + 2 reduced [2Fe-2S]-[ferredoxin]. The protein operates within protein modification; protein lipoylation via endogenous pathway; protein N(6)-(lipoyl)lysine from octanoyl-[acyl-carrier-protein]: step 2/2. Catalyzes the radical-mediated insertion of two sulfur atoms into the C-6 and C-8 positions of the octanoyl moiety bound to the lipoyl domains of lipoate-dependent enzymes, thereby converting the octanoylated domains into lipoylated derivatives. The sequence is that of Lipoyl synthase from Roseiflexus sp. (strain RS-1).